We begin with the raw amino-acid sequence, 230 residues long: Sugar fermentation stimulation protein homolog (230 aa).

Belongs to the SfsA family.

In Clostridium botulinum (strain Loch Maree / Type A3), this protein is Sugar fermentation stimulation protein homolog.